A 784-amino-acid chain; its full sequence is Receptor-like protein 38 (784 aa).

The signal sequence occupies residues 1–30 (MIRSQSYCFLGITITIYFFFCLLPLPNTFA). Residues 31–752 (SPPTQSLCRH…SELEEPVLNW (722 aa)) are Extracellular-facing. LRR repeat units follow at residues 109–133 (LQHL…IENL), 134–157 (SHLT…IGNL), 158–180 (NQLE…SFAN), 182–204 (TKLS…LSNL), and 205–227 (TSLA…DLSG). Asn-132 carries an N-linked (GlcNAc...) asparagine glycan. N-linked (GlcNAc...) asparagine glycans are attached at residues Asn-180, Asn-193, and Asn-203. The stretch at 228–251 (LHNLEQIFGNENSFVGLFPASLLK) is one LRR 6; degenerate repeat. 10 LRR repeats span residues 252 to 276 (ISSL…NTSS), 278 to 301 (SRLT…LSKL), 302 to 324 (VNLE…SISK), 326 to 349 (VNLT…IWKP), 351 to 373 (NLQS…EVVN), 374 to 400 (GAKL…NFRF), 402 to 422 (FFLD…LKNS), 423 to 446 (TDFN…CMDS), 447 to 470 (TMLR…LMNC), and 472 to 496 (DMEF…SRKS). An N-linked (GlcNAc...) asparagine glycan is attached at Asn-273. Asn-327 is a glycosylation site (N-linked (GlcNAc...) asparagine). N-linked (GlcNAc...) asparagine glycans are attached at residues Asn-421 and Asn-432. Residues 497 to 518 (LMVLVLRSNAFYGPVYNSTTYL) form an LRR 17; degenerate repeat. Asn-513, Asn-544, and Asn-562 each carry an N-linked (GlcNAc...) asparagine glycan. The LRR 18 repeat unit spans residues 520–544 (FPRLSIIDISNNDFVGSLPQDYFAN). 4 LRR repeats span residues 608-632 (FRGF…IGLL), 633-656 (SELL…LANI), 657-680 (TNLE…LGNL), and 682-705 (FLSN…QFGT). N-linked (GlcNAc...) asparagine glycans are attached at residues Asn-639, Asn-655, Asn-668, Asn-679, Asn-687, and Asn-707. Residues 753-773 (IAAAIAFGPGVFCGFVIGHIF) form a helical membrane-spanning segment. Residues 774-784 (TSYKHLWFIAR) are Cytoplasmic-facing.

It belongs to the RLP family.

The protein localises to the cell membrane. The sequence is that of Receptor-like protein 38 from Arabidopsis thaliana (Mouse-ear cress).